Reading from the N-terminus, the 140-residue chain is Small ribosomal subunit protein eS12 (140 aa).

Belongs to the eukaryotic ribosomal protein eS12 family. Part of the small subunit (SSU) processome, composed of more than 70 proteins and the RNA chaperone small nucleolar RNA (snoRNA) U3. Subunit of the 40S ribosomal complex.

It localises to the nucleus. The protein resides in the nucleolus. Part of the small subunit (SSU) processome, first precursor of the small eukaryotic ribosomal subunit. During the assembly of the SSU processome in the nucleolus, many ribosome biogenesis factors, an RNA chaperone and ribosomal proteins associate with the nascent pre-rRNA and work in concert to generate RNA folding, modifications, rearrangements and cleavage as well as targeted degradation of pre-ribosomal RNA by the RNA exosome. Subunit of the 40S ribosomal complex. Involved in cold-warm shock-induced translocation of the RNA exosome components from the nucleolus to nucleoplasm. The sequence is that of Small ribosomal subunit protein eS12 (rps-12) from Caenorhabditis elegans.